Here is a 218-residue protein sequence, read N- to C-terminus: MFEGPLQDLIDELSRLPGVGPKSAQRIAFHLLNVDPTDITRLQEALGGVRDGVQFCRICCNISREEVCRICSDSGRDGGTICVVEEPKDIQVIERTGEFSGRYHVLGGALDPLANIGPRELNISTLLQRIGGVLPDRELADSTPENKLFDATPTVREVILATDPNTEGEATASYLGRLLKDFPDLVVSRLASGMPLGGDLEFVDELTLSRALSGRLQI.

The segment at C56–C71 adopts a C4-type zinc-finger fold. Residues G79 to P195 enclose the Toprim domain.

The protein belongs to the RecR family.

Its function is as follows. May play a role in DNA repair. It seems to be involved in an RecBC-independent recombinational process of DNA repair. It may act with RecF and RecO. The chain is Recombination protein RecR from Corynebacterium glutamicum (strain R).